The chain runs to 148 residues: Deoxyuridine 5'-triphosphate nucleotidohydrolase (148 aa).

Residues 68 to 70 (RSG), Asn-81, 85 to 87 (TID), and Lys-95 each bind substrate.

Belongs to the dUTPase family. Requires Mg(2+) as cofactor.

The catalysed reaction is dUTP + H2O = dUMP + diphosphate + H(+). The protein operates within pyrimidine metabolism; dUMP biosynthesis; dUMP from dCTP (dUTP route): step 2/2. In terms of biological role, this enzyme is involved in nucleotide metabolism: it produces dUMP, the immediate precursor of thymidine nucleotides and it decreases the intracellular concentration of dUTP so that uracil cannot be incorporated into DNA. This chain is Deoxyuridine 5'-triphosphate nucleotidohydrolase, found in Rickettsia canadensis (strain McKiel).